Here is a 483-residue protein sequence, read N- to C-terminus: Bifunctional pantoate ligase/cytidylate kinase (483 aa).

The pantoate--beta-alanine ligase stretch occupies residues 1 to 246 (MPTMGALHAG…CGSTRLIDHA (246 aa)). ATP is bound at residue 4 to 11 (MGALHAGH). Catalysis depends on H11, which acts as the Proton donor. Residue Q34 coordinates (R)-pantoate. Q34 provides a ligand contact to beta-alanine. 124 to 127 (GEKD) serves as a coordination point for ATP. Q130 is a (R)-pantoate binding site. ATP-binding positions include V153 and 161 to 164 (LSSR). A cytidylate kinase region spans residues 247-483 (FLMTRQPLVA…AEEAWPTPQR (237 aa)).

This sequence in the N-terminal section; belongs to the pantothenate synthetase family. It in the C-terminal section; belongs to the cytidylate kinase family. Type 1 subfamily.

It localises to the cytoplasm. It catalyses the reaction (R)-pantoate + beta-alanine + ATP = (R)-pantothenate + AMP + diphosphate + H(+). It carries out the reaction CMP + ATP = CDP + ADP. The enzyme catalyses dCMP + ATP = dCDP + ADP. Its pathway is cofactor biosynthesis; (R)-pantothenate biosynthesis; (R)-pantothenate from (R)-pantoate and beta-alanine: step 1/1. In terms of biological role, catalyzes the condensation of pantoate with beta-alanine in an ATP-dependent reaction via a pantoyl-adenylate intermediate. Its function is as follows. Catalyzes the transfer of a phosphate group from ATP to either CMP or dCMP to form CDP or dCDP and ADP, respectively. The protein is Bifunctional pantoate ligase/cytidylate kinase of Synechococcus sp. (strain CC9902).